Here is a 705-residue protein sequence, read N- to C-terminus: Elongation factor G (705 aa).

Residues 8 to 290 (ERYRNFGIMA…GVVHLLPSPA (283 aa)) form the tr-type G domain. Residues 17-24 (AHIDAGKT), 88-92 (DTPGH), and 142-145 (NKMD) each bind GTP. Residues 290–309 (ADRPPVQGIDEDEKEDTRAA) are disordered.

The protein belongs to the TRAFAC class translation factor GTPase superfamily. Classic translation factor GTPase family. EF-G/EF-2 subfamily.

The protein localises to the cytoplasm. In terms of biological role, catalyzes the GTP-dependent ribosomal translocation step during translation elongation. During this step, the ribosome changes from the pre-translocational (PRE) to the post-translocational (POST) state as the newly formed A-site-bound peptidyl-tRNA and P-site-bound deacylated tRNA move to the P and E sites, respectively. Catalyzes the coordinated movement of the two tRNA molecules, the mRNA and conformational changes in the ribosome. This Xanthomonas euvesicatoria pv. vesicatoria (strain 85-10) (Xanthomonas campestris pv. vesicatoria) protein is Elongation factor G.